Reading from the N-terminus, the 387-residue chain is GTP-binding protein 10 (387 aa).

The 136-residue stretch at 13-148 (GNFIDNLRLF…RVIHLDLKLI (136 aa)) folds into the Obg domain. In terms of domain architecture, OBG-type G spans 149 to 344 (ADIGLVGFPN…LKNCIRKSLD (196 aa)). GTP-binding positions include 155–162 (GFPNAGKS), 202–206 (DLPGL), and 278–281 (NKMD).

This sequence belongs to the TRAFAC class OBG-HflX-like GTPase superfamily. OBG GTPase family.

Its subcellular location is the nucleus. The protein resides in the nucleolus. In terms of biological role, may be involved in the ribosome maturation process. The sequence is that of GTP-binding protein 10 (GTPBP10) from Bos taurus (Bovine).